The chain runs to 85 residues: Putative regulatory protein Dtur_1444 (85 aa).

This sequence belongs to the RemA family.

This is Putative regulatory protein Dtur_1444 from Dictyoglomus turgidum (strain DSM 6724 / Z-1310).